The following is a 335-amino-acid chain: Zinc transporter ZIP11 (335 aa).

The next 7 membrane-spanning stretches (helical) occupy residues leucine 12–phenylalanine 32, leucine 44–valine 64, glycine 72–valine 92, isoleucine 187–valine 207, phenylalanine 256–valine 278, valine 283–methionine 300, and leucine 315–glycine 335.

The protein belongs to the ZIP transporter (TC 2.A.5) family.

The protein resides in the cell membrane. It localises to the nucleus. Its subcellular location is the cytoplasm. The protein localises to the golgi apparatus. The enzyme catalyses Zn(2+)(in) = Zn(2+)(out). It carries out the reaction Cu(2+)(in) = Cu(2+)(out). Zinc importer that regulates cytosolic zinc concentrations either via zinc influx from the extracellular compartment or efflux from intracellular organelles such as Golgi apparatus. May transport copper ions as well. The transport mechanism remains to be elucidated. The polypeptide is Zinc transporter ZIP11 (Slc39a11) (Rattus norvegicus (Rat)).